The chain runs to 233 residues: Leucyl/phenylalanyl-tRNA--protein transferase (233 aa).

The protein belongs to the L/F-transferase family.

It is found in the cytoplasm. It carries out the reaction N-terminal L-lysyl-[protein] + L-leucyl-tRNA(Leu) = N-terminal L-leucyl-L-lysyl-[protein] + tRNA(Leu) + H(+). The enzyme catalyses N-terminal L-arginyl-[protein] + L-leucyl-tRNA(Leu) = N-terminal L-leucyl-L-arginyl-[protein] + tRNA(Leu) + H(+). It catalyses the reaction L-phenylalanyl-tRNA(Phe) + an N-terminal L-alpha-aminoacyl-[protein] = an N-terminal L-phenylalanyl-L-alpha-aminoacyl-[protein] + tRNA(Phe). Functions in the N-end rule pathway of protein degradation where it conjugates Leu, Phe and, less efficiently, Met from aminoacyl-tRNAs to the N-termini of proteins containing an N-terminal arginine or lysine. The chain is Leucyl/phenylalanyl-tRNA--protein transferase from Klebsiella pneumoniae subsp. pneumoniae (strain ATCC 700721 / MGH 78578).